The sequence spans 710 residues: Zinc finger and BTB domain-containing protein 24 (710 aa).

The BTB domain maps to 37–103; that stretch reads CDITLIVENV…IYTGYLHASE (67 aa). Disordered regions lie at residues 134–176 and 202–256; these read APKP…EGRS and EEDS…SRRR. The segment at residues 159–171 is a DNA-binding region (a.T hook); it reads KRKRGRPRKANGL. Composition is skewed to basic and acidic residues over residues 202-219 and 231-244; these read EEDS…KESE and PAEK…KAGD. C2H2-type zinc fingers lie at residues 293 to 315, 321 to 343, 349 to 371, 377 to 399, 405 to 427, 433 to 455, 461 to 483, and 489 to 511; these read ARCK…QRRH, FKCN…TRMH, YTCT…MSLH, FTCD…YRVH, PECS…LRTH, FTCE…IRIH, YSCS…CILH, and FSCP…LKIH. The segment at 651 to 676 is disordered; it reads EQTTSSVPAADTGARATPVPSTRPGA.

This sequence belongs to the krueppel C2H2-type zinc-finger protein family. Interacts with MN1. Widely expressed. Highest level in liver, testis and kidney.

It is found in the nucleus. In terms of biological role, may be involved in BMP2-induced transcription. This Mus musculus (Mouse) protein is Zinc finger and BTB domain-containing protein 24 (Zbtb24).